A 20-amino-acid chain; its full sequence is Protein PR-L3 (20 aa).

This sequence belongs to the BetVI family.

The sequence is that of Protein PR-L3 from Lupinus luteus (European yellow lupine).